Here is a 160-residue protein sequence, read N- to C-terminus: UPF0479 membrane protein YLL066W-A (160 aa).

A run of 2 helical transmembrane segments spans residues 39-59 and 136-156; these read IVFC…KVLQ and VPMI…ISQH.

It belongs to the UPF0479 family.

It is found in the membrane. The polypeptide is UPF0479 membrane protein YLL066W-A (Saccharomyces cerevisiae (strain ATCC 204508 / S288c) (Baker's yeast)).